The primary structure comprises 491 residues: Delayed-rectifier potassium channel regulatory subunit KCNS3 (491 aa).

The Cytoplasmic portion of the chain corresponds to 1–182 (MVFGEFFHRP…IRMENPAYCL (182 aa)). A helical membrane pass occupies residues 183–204 (SAKLIAISSLSVVLASIVAMCV). The Extracellular portion of the chain corresponds to 205–220 (HSMSEFQNEDGEVDDP). A helical membrane pass occupies residues 221-243 (VLEGVEIACIAWFTGELAVRLVA). Over 244 to 254 (APCQKKFWKNP) the chain is Cytoplasmic. Residues 255 to 275 (LNIIDFVSIIPFYATLAVDTK) traverse the membrane as a helical segment. The Extracellular portion of the chain corresponds to 276–285 (EEESEDIENM). A helical; Voltage-sensor transmembrane segment spans residues 286-306 (GKVVQILRLMRIFRILKLARH). The Cytoplasmic portion of the chain corresponds to 307–321 (SVGLRSLGATLRHSY). The helical transmembrane segment at 322-343 (HEVGLLLLFLSVGISIFSVLIY) threads the bilayer. Residues 344 to 357 (SVEKDDHTSSLTSI) lie on the Extracellular side of the membrane. Residues 358–369 (PICWWWATISMT) constitute an intramembrane region (helical). Positions 370–375 (TVGYGD) match the Selectivity filter motif. An intramembrane segment occupies 370-377 (TVGYGDTH). Residues 378-384 (PVTLAGK) lie on the Extracellular side of the membrane. The chain crosses the membrane as a helical span at residues 385–413 (LIASTCIICGILVVALPITIIFNKFSKYY). Residues 414-491 (QKQKDIDVDQ…TASLENCTAK (78 aa)) are Cytoplasmic-facing.

This sequence belongs to the potassium channel family. S (TC 1.A.1.2) subfamily. Kv9.3/KCNS3 sub-subfamily. As to quaternary structure, heterotetramer with KCNB1. Does not form homomultimers.

The protein localises to the cell membrane. Potassium channel regulatory subunit that modulates the delayed rectifier potassium channel activity of KCNB1 by namely slowing down the deactivation and inactivation time constants. While it does not form functional channel on its own, it can form functional heterotetrameric channels with KCNB1. The sequence is that of Delayed-rectifier potassium channel regulatory subunit KCNS3 from Oryctolagus cuniculus (Rabbit).